A 163-amino-acid chain; its full sequence is Large ribosomal subunit protein bL19 (163 aa).

The span at 131–150 shows a compositional bias: basic and acidic residues; sequence ISQERKASGKDQASKPEVRP. A disordered region spans residues 131–163; it reads ISQERKASGKDQASKPEVRPQGKKPAPKPKAKK. The segment covering 151 to 163 has biased composition (basic residues); that stretch reads QGKKPAPKPKAKK.

It belongs to the bacterial ribosomal protein bL19 family.

Its function is as follows. This protein is located at the 30S-50S ribosomal subunit interface and may play a role in the structure and function of the aminoacyl-tRNA binding site. This chain is Large ribosomal subunit protein bL19, found in Rhodospirillum rubrum (strain ATCC 11170 / ATH 1.1.1 / DSM 467 / LMG 4362 / NCIMB 8255 / S1).